We begin with the raw amino-acid sequence, 364 residues long: Palmitoyltransferase ZDHHC9 (364 aa).

Over 1–35 (MSVMVVRKKVTRKWEKLPGRNTFCCDGRVMMARQK) the chain is Cytoplasmic. A helical transmembrane segment spans residues 36–56 (GIFYLTLFLILGTCTLFFAFE). Residues 57-63 (CRYLAVQ) are Lumenal-facing. The chain crosses the membrane as a helical span at residues 64-84 (LSPAIPVFAAMLFLFSMATLL). Over 85 to 183 (RTSFSDPGVI…NCVGKRNYRY (99 aa)) the chain is Cytoplasmic. Residues 139-189 (KYCYTCKIFRPPRASHCSICDNCVERFDHHCPWVGNCVGKRNYRYFYLFIL) form the DHHC domain. The S-palmitoyl cysteine intermediate role is filled by Cys-169. A helical membrane pass occupies residues 184–204 (FYLFILSLSLLTIYVFAFNIV). Residues 205–228 (YVALKSLKIGFLETLKETPGTVLE) lie on the Lumenal side of the membrane. A helical transmembrane segment spans residues 229 to 249 (VLICFFTLWSVVGLTGFHTFL). Topologically, residues 250-364 (VALNQTTNED…PPQEASEAEK (115 aa)) are cytoplasmic. The interval 303–364 (PLEESGSRPP…PPQEASEAEK (62 aa)) is disordered. A compositionally biased stretch (polar residues) spans 310-336 (RPPSTQETSSSLLPQSPASTEHMNSNE). Residues 346 to 356 (EMPPPEPPEPP) are compositionally biased toward pro residues.

This sequence belongs to the DHHC palmitoyltransferase family. ERF2/ZDHHC9 subfamily. Interacts with GOLGA7.

It is found in the endoplasmic reticulum membrane. Its subcellular location is the golgi apparatus membrane. It catalyses the reaction L-cysteinyl-[protein] + hexadecanoyl-CoA = S-hexadecanoyl-L-cysteinyl-[protein] + CoA. In terms of biological role, palmitoyltransferase that catalyzes the addition of palmitate onto various protein substrates, such as ADRB2, GSDMD, HRAS, NRAS and CGAS. The ZDHHC9-GOLGA7 complex is a palmitoyltransferase specific for HRAS and NRAS. May have a palmitoyltransferase activity toward the beta-2 adrenergic receptor/ADRB2 and therefore regulate G protein-coupled receptor signaling. Acts as a regulator of innate immunity by catalyzing palmitoylation of CGAS, thereby promoting CGAS homodimerization and cyclic GMP-AMP synthase activity. Activates pyroptosis by catalyzing palmitoylation of gasdermin-D (GSDMD), thereby promoting membrane translocation and pore formation of GSDMD. This Mus musculus (Mouse) protein is Palmitoyltransferase ZDHHC9 (Zdhhc9).